The sequence spans 122 residues: uncharacterized protein (122 aa).

Residues 1-15 (MAEPGGRGDYRKDGR) show a composition bias toward basic and acidic residues. The interval 1-49 (MAEPGGRGDYRKDGRLPSLSRSPLSTTLGTSPACGLEIPPTSGARPDGS) is disordered. The span at 16-32 (LPSLSRSPLSTTLGTSP) shows a compositional bias: low complexity.

This is an uncharacterized protein from Homo sapiens (Human).